Here is a 1878-residue protein sequence, read N- to C-terminus: DNA polymerase (1878 aa).

Disordered stretches follow at residues 691–727 (LFQA…KGPN) and 1839–1878 (TQDD…GTMF). The segment covering 694–709 (ADDDDDDDDEDEDDGL) has biased composition (acidic residues). Over residues 710–723 (LDERQQDSAEDMKK) the composition is skewed to basic and acidic residues. Low complexity predominate over residues 1868-1878 (ITAGKTAGTMF).

Belongs to the DNA polymerase type-B family.

It catalyses the reaction DNA(n) + a 2'-deoxyribonucleoside 5'-triphosphate = DNA(n+1) + diphosphate. This Magallana gigas (Pacific oyster) protein is DNA polymerase.